We begin with the raw amino-acid sequence, 185 residues long: Small ribosomal subunit protein bS6 (185 aa).

The segment covering 115 to 141 has biased composition (basic and acidic residues); it reads AAQKAAAEKAEAARLEAEKAAEEEAAK. Positions 115-185 are disordered; that stretch reads AAQKAAAEKA…EEPKSDEEDA (71 aa). The segment covering 142–169 has biased composition (low complexity); it reads AAEAQAKEAPAAEAPAEEAPAAEAPAEA. Residues 170–185 show a composition bias toward acidic residues; it reads PAEEPAEEPKSDEEDA.

Belongs to the bacterial ribosomal protein bS6 family.

Binds together with bS18 to 16S ribosomal RNA. In Desulfatibacillum aliphaticivorans, this protein is Small ribosomal subunit protein bS6.